The sequence spans 610 residues: Prolactin receptor (610 aa).

The signal sequence occupies residues 1 to 19 (MPSALAFVLLVLNISLLKG). Residues 20–229 (QSPPGKPEIH…EMPNDFTLKD (210 aa)) are Extracellular-facing. 2 Fibronectin type-III domains span residues 22 to 122 (PPGK…IVEP) and 124 to 224 (PPRN…MPND). A disulfide bridge links cysteine 31 with cysteine 41. Asparagine 54 carries an N-linked (GlcNAc...) asparagine glycan. Cysteine 70 and cysteine 81 are disulfide-bonded. 2 N-linked (GlcNAc...) asparagine glycosylation sites follow: asparagine 99 and asparagine 127. Aspartate 206 and histidine 207 together coordinate Zn(2+). Positions 210 to 214 (WSRWS) match the WSXWS motif motif. Residues 230 to 253 (TTVWIIVAILSAVICLIMVWAVAL) form a helical membrane-spanning segment. The Cytoplasmic portion of the chain corresponds to 254-610 (KGYSMMTCIF…DPTCFMHSFH (357 aa)). Residues 262 to 270 (IFPPVPGPK) carry the Box 1 motif motif. 3 disordered regions span residues 317 to 355 (DERL…HSLL), 458 to 482 (TGEE…TPWP), and 564 to 584 (AKKA…ASFT). Basic and acidic residues predominate over residues 318–327 (ERLMPSHSKE). A compositionally biased stretch (low complexity) spans 345–354 (GHGSYDSHSL).

It belongs to the type I cytokine receptor family. Type 1 subfamily. In terms of assembly, interacts with SMARCA1. Interacts with NEK3 and VAV2 and this interaction is prolactin-dependent.

It localises to the membrane. Its function is as follows. This is a receptor for the anterior pituitary hormone prolactin. The chain is Prolactin receptor (Prlr) from Rattus norvegicus (Rat).